A 134-amino-acid chain; its full sequence is Large ribosomal subunit protein eL32 (134 aa).

This sequence belongs to the eukaryotic ribosomal protein eL32 family.

This Drosophila bifasciata (Fruit fly) protein is Large ribosomal subunit protein eL32 (RpL32).